The chain runs to 230 residues: Leucyl/phenylalanyl-tRNA--protein transferase (230 aa).

The protein belongs to the L/F-transferase family.

It is found in the cytoplasm. It catalyses the reaction N-terminal L-lysyl-[protein] + L-leucyl-tRNA(Leu) = N-terminal L-leucyl-L-lysyl-[protein] + tRNA(Leu) + H(+). The catalysed reaction is N-terminal L-arginyl-[protein] + L-leucyl-tRNA(Leu) = N-terminal L-leucyl-L-arginyl-[protein] + tRNA(Leu) + H(+). The enzyme catalyses L-phenylalanyl-tRNA(Phe) + an N-terminal L-alpha-aminoacyl-[protein] = an N-terminal L-phenylalanyl-L-alpha-aminoacyl-[protein] + tRNA(Phe). Functions in the N-end rule pathway of protein degradation where it conjugates Leu, Phe and, less efficiently, Met from aminoacyl-tRNAs to the N-termini of proteins containing an N-terminal arginine or lysine. The chain is Leucyl/phenylalanyl-tRNA--protein transferase from Erwinia tasmaniensis (strain DSM 17950 / CFBP 7177 / CIP 109463 / NCPPB 4357 / Et1/99).